An 853-amino-acid polypeptide reads, in one-letter code: DNA mismatch repair protein MutS (853 aa).

614–621 is a binding site for ATP; sequence GPNMGGKS.

This sequence belongs to the DNA mismatch repair MutS family.

In terms of biological role, this protein is involved in the repair of mismatches in DNA. It is possible that it carries out the mismatch recognition step. This protein has a weak ATPase activity. The polypeptide is DNA mismatch repair protein MutS (Escherichia coli O1:K1 / APEC).